The primary structure comprises 357 residues: DNA replication and repair protein RecF (357 aa).

Residue 31–38 coordinates ATP; it reads GQNGAGKT.

This sequence belongs to the RecF family.

It localises to the cytoplasm. Functionally, the RecF protein is involved in DNA metabolism; it is required for DNA replication and normal SOS inducibility. RecF binds preferentially to single-stranded, linear DNA. It also seems to bind ATP. This chain is DNA replication and repair protein RecF, found in Coxiella burnetii (strain Dugway 5J108-111).